Reading from the N-terminus, the 225-residue chain is Protein YIP4 (225 aa).

A phosphoserine mark is found at serine 27 and serine 28. 5 consecutive transmembrane segments (helical) span residues 91–111, 118–138, 154–176, 180–199, and 205–225; these read WDLWGPLIFSLVIALALALST, SVFTVVVALIWFGEAVCSLNI, LGYSSFPLMIASIVCAFVPLIFI, VIVAMYAWTLFAAMGVLQNS, and KLLAVYPLFLFYFSLAWIIFL.

The protein belongs to the YIP1 family. As to quaternary structure, interacts with the YIP1 family members yip1 and yip5, and with several Rab GTPases.

Its subcellular location is the membrane. Its function is as follows. May be involved in proper membrane localization of Rab GTPases. This chain is Protein YIP4, found in Schizosaccharomyces pombe (strain 972 / ATCC 24843) (Fission yeast).